We begin with the raw amino-acid sequence, 560 residues long: Arginine--tRNA ligase (560 aa).

The 'HIGH' region signature appears at 122–132 (ANPNGPLHVGH).

The protein belongs to the class-I aminoacyl-tRNA synthetase family.

It is found in the cytoplasm. It carries out the reaction tRNA(Arg) + L-arginine + ATP = L-arginyl-tRNA(Arg) + AMP + diphosphate. The chain is Arginine--tRNA ligase from Methanosphaera stadtmanae (strain ATCC 43021 / DSM 3091 / JCM 11832 / MCB-3).